A 162-amino-acid polypeptide reads, in one-letter code: Caveolin-2 (162 aa).

At 1-86 the chain is on the cytoplasmic side; it reads MGLEKEKLEC…FELVKFIFYR (86 aa). Positions 87–107 form an intramembrane region, helical; it reads LLTTLLAVPAAFILGVVFGVL. Topologically, residues 108–162 are cytoplasmic; that stretch reads SCIHIWLVMPVTRSFLMLLPSIQVVWKSVTDMFITPLFHSMGRSLSSIQVRTSDT.

The protein belongs to the caveolin family. Homooligomer.

It localises to the golgi apparatus membrane. It is found in the cell membrane. Its subcellular location is the membrane. The protein resides in the caveola. Functionally, may act as a scaffolding protein within caveolar membranes. Interacts directly with G-protein alpha subunits and can functionally regulate their activity. This Takifugu rubripes (Japanese pufferfish) protein is Caveolin-2 (cav2).